The sequence spans 568 residues: Urease subunit alpha (568 aa).

The Ni(2+) site is built by His-134, His-136, and Lys-217. Lys-217 carries the post-translational modification N6-carboxylysine. A substrate-binding site is contributed by His-219. Ni(2+) contacts are provided by His-246 and His-272. Residue His-320 is the Proton donor of the active site. Asp-360 is a Ni(2+) binding site.

It belongs to the metallo-dependent hydrolases superfamily. Urease alpha subunit family. In terms of assembly, heterotrimer of UreA (gamma), UreB (beta) and UreC (alpha) subunits. Three heterotrimers associate to form the active enzyme. Ni cation is required as a cofactor. Post-translationally, carboxylation allows a single lysine to coordinate two nickel ions.

It localises to the cytoplasm. It carries out the reaction urea + 2 H2O + H(+) = hydrogencarbonate + 2 NH4(+). It participates in nitrogen metabolism; urea degradation; CO(2) and NH(3) from urea (urease route): step 1/1. This is Urease subunit alpha from Marinomonas sp. (strain MWYL1).